A 692-amino-acid polypeptide reads, in one-letter code: Elongation factor G 2 (692 aa).

The 276-residue stretch at 8 to 283 (EKTRNIGIMA…AVIDYMPSPV (276 aa)) folds into the tr-type G domain. Residues 17-24 (AHIDAGKT), 81-85 (DTPGH), and 135-138 (NKMD) each bind GTP.

This sequence belongs to the TRAFAC class translation factor GTPase superfamily. Classic translation factor GTPase family. EF-G/EF-2 subfamily.

The protein localises to the cytoplasm. Functionally, catalyzes the GTP-dependent ribosomal translocation step during translation elongation. During this step, the ribosome changes from the pre-translocational (PRE) to the post-translocational (POST) state as the newly formed A-site-bound peptidyl-tRNA and P-site-bound deacylated tRNA move to the P and E sites, respectively. Catalyzes the coordinated movement of the two tRNA molecules, the mRNA and conformational changes in the ribosome. This is Elongation factor G 2 from Syntrophotalea carbinolica (strain DSM 2380 / NBRC 103641 / GraBd1) (Pelobacter carbinolicus).